A 364-amino-acid chain; its full sequence is PDZ and LIM domain protein 3 (364 aa).

Positions 1–84 (MPQTVILPGP…QLCLKIDRGE (84 aa)) constitute a PDZ domain. Residues serine 18, serine 93, and serine 264 each carry the phosphoserine modification. The region spanning 292 to 351 (PLCDKCGSGIVGAVVKARDKYRHPECFVCADCNLNLKQKGYFFIEGELYCETHARARTKP) is the LIM zinc-binding domain.

As to quaternary structure, interacts with ACTN2. Forms a heterodimer with PDLIM4 (via LIM domain). Isoform 1 is highly expressed in differentiated skeletal muscle. Isoform 2 is heart-specific.

The protein resides in the cytoplasm. It is found in the myofibril. It localises to the sarcomere. Its subcellular location is the z line. In terms of biological role, may play a role in the organization of actin filament arrays within muscle cells. In Homo sapiens (Human), this protein is PDZ and LIM domain protein 3 (PDLIM3).